The chain runs to 1037 residues: Probable inorganic carbon transporter subunit DabA 1 (1037 aa).

Zn(2+) is bound by residues cysteine 460, aspartate 462, histidine 719, and cysteine 734.

It belongs to the inorganic carbon transporter (TC 9.A.2) DabA family. As to quaternary structure, forms a complex with DabB. It depends on Zn(2+) as a cofactor.

It localises to the cell inner membrane. Its function is as follows. Part of an energy-coupled inorganic carbon pump. This chain is Probable inorganic carbon transporter subunit DabA 1, found in Nitrobacter winogradskyi (strain ATCC 25391 / DSM 10237 / CIP 104748 / NCIMB 11846 / Nb-255).